The primary structure comprises 210 residues: Outer-membrane lipoprotein LolB (210 aa).

A signal peptide spans 1–26; the sequence is MSKLKIDTKRRFSLLIALVLIISLSS. Residue Cys27 is the site of N-palmitoyl cysteine attachment. Cys27 carries S-diacylglycerol cysteine lipidation.

Belongs to the LolB family. Monomer.

The protein resides in the cell outer membrane. Functionally, plays a critical role in the incorporation of lipoproteins in the outer membrane after they are released by the LolA protein. The chain is Outer-membrane lipoprotein LolB from Francisella tularensis subsp. novicida (strain U112).